A 447-amino-acid polypeptide reads, in one-letter code: Cysteine--tRNA ligase (447 aa).

Residue Cys28 participates in Zn(2+) binding. Positions 30–40 (PTVYNYIHIGN) match the 'HIGH' region motif. 3 residues coordinate Zn(2+): Cys211, His236, and Glu240. The 'KMSKS' region motif lies at 268–272 (KMSKS). Lys271 contacts ATP.

The protein belongs to the class-I aminoacyl-tRNA synthetase family. As to quaternary structure, monomer. It depends on Zn(2+) as a cofactor.

The protein resides in the cytoplasm. The catalysed reaction is tRNA(Cys) + L-cysteine + ATP = L-cysteinyl-tRNA(Cys) + AMP + diphosphate. The polypeptide is Cysteine--tRNA ligase (Streptococcus agalactiae serotype Ia (strain ATCC 27591 / A909 / CDC SS700)).